Reading from the N-terminus, the 20-residue chain is Ranalexin-1Cb (20 aa).

An intrachain disulfide couples Cys14 to Cys20.

As to expression, expressed by the skin glands.

Its subcellular location is the secreted. Antibacterial activity against Gram-positive bacterium S.aureus and Gram-negative bacterium E.coli. Has activity against C.albicans. The protein is Ranalexin-1Cb of Lithobates clamitans (Green frog).